The primary structure comprises 121 residues: Small ribosomal subunit protein bS6 (121 aa).

The disordered stretch occupies residues 99-121 (PLPAPRVAPGTEAPAEPEAAAPA). Residues 110-121 (EAPAEPEAAAPA) show a composition bias toward low complexity.

Belongs to the bacterial ribosomal protein bS6 family.

Binds together with bS18 to 16S ribosomal RNA. This Synechococcus sp. (strain CC9311) protein is Small ribosomal subunit protein bS6.